Consider the following 307-residue polypeptide: Fructose-bisphosphate aldolase (307 aa).

Ser49 contacts D-glyceraldehyde 3-phosphate. The Proton donor role is filled by Asp82. The Zn(2+) site is built by His83, Asp104, Glu134, and His180. Gly181 lines the dihydroxyacetone phosphate pocket. Residue His210 coordinates Zn(2+). Dihydroxyacetone phosphate-binding positions include 211-213 (GAS) and 253-256 (NTDT).

This sequence belongs to the class II fructose-bisphosphate aldolase family. As to quaternary structure, homodimer. It depends on Zn(2+) as a cofactor.

It carries out the reaction beta-D-fructose 1,6-bisphosphate = D-glyceraldehyde 3-phosphate + dihydroxyacetone phosphate. The protein operates within carbohydrate degradation; glycolysis; D-glyceraldehyde 3-phosphate and glycerone phosphate from D-glucose: step 4/4. Its function is as follows. Catalyzes the aldol condensation of dihydroxyacetone phosphate (DHAP or glycerone-phosphate) with glyceraldehyde 3-phosphate (G3P) to form fructose 1,6-bisphosphate (FBP) in gluconeogenesis and the reverse reaction in glycolysis. The sequence is that of Fructose-bisphosphate aldolase (fba) from Helicobacter pylori (strain J99 / ATCC 700824) (Campylobacter pylori J99).